A 173-amino-acid chain; its full sequence is Large ribosomal subunit protein uL22c (173 aa).

The protein belongs to the universal ribosomal protein uL22 family. Part of the 50S ribosomal subunit.

It localises to the plastid. It is found in the chloroplast. Its function is as follows. This protein binds specifically to 23S rRNA. Functionally, the globular domain of the protein is located near the polypeptide exit tunnel on the outside of the subunit, while an extended beta-hairpin is found that lines the wall of the exit tunnel in the center of the 70S ribosome. The sequence is that of Large ribosomal subunit protein uL22c (rpl22) from Drimys granadensis.